A 476-amino-acid chain; its full sequence is MGEIAPEMEISQYTKDKASCTRISIESYYSKRVTQCAERENRLKKLEEDISARGLSDEEKEEKRKIHHSKETDYLRLKRTRLTVNDFESLKVIGRGAFGEVRLVQKHDTGHIYAMKILRKSEMVEKEQTAHVRAERDILSEADCDWVVKMYYSFQDYSNLYLVMEFLPGGDMMTLLIKKDTLTEEATQFYIAEAALAIQFIHSLGFIHRDIKPDNLLLDARGHVKLSDFGLCTGLKKFHRTDHYRNWPSTLPPDFISKPFESKRKAETWKRNRRAYAYSTVGTPDYIAPEVFQPNGYTKSCDWWSLGVIMYEMLIGYPPFCSELPQETYRKVINWQQTLVFPSDVPISIEAKATIKRFCCEAERRLGNHGGLDEIKQCPFVKRIDWNHIRERPPPIRVTVKSIDDTSNFDDFPDEDLTWPTSTLIRPEEQPGRRGEFVDFTYKRFDGLTQKMRYSDLKKFQQAKKNKKGGQQGTSD.

Positions 87 to 381 (FESLKVIGRG…LDEIKQCPFV (295 aa)) constitute a Protein kinase domain. Residues 93–101 (IGRGAFGEV) and K116 contribute to the ATP site. Catalysis depends on D210, which acts as the Proton acceptor. Positions 382–452 (KRIDWNHIRE…KRFDGLTQKM (71 aa)) constitute an AGC-kinase C-terminal domain.

Belongs to the protein kinase superfamily. AGC Ser/Thr protein kinase family. Mg(2+) serves as cofactor. Widely expressed in embryonic and larval neurons that contribute axons to the nerve ring and in hypodermal cells, including lateral seam cells. Also displays a punctate localization in muscle.

Its subcellular location is the cytoplasm. It is found in the nucleus. It catalyses the reaction L-seryl-[protein] + ATP = O-phospho-L-seryl-[protein] + ADP + H(+). The catalysed reaction is L-threonyl-[protein] + ATP = O-phospho-L-threonyl-[protein] + ADP + H(+). In terms of biological role, acts with sax-2 to restrict the growth of both primary and secondary neurites. Regulates mechanosensory tiling by controlling the termination point of sensory dendrites. This Caenorhabditis elegans protein is Serine/threonine-protein kinase sax-1.